Consider the following 146-residue polypeptide: Hemoglobin subunit beta (146 aa).

Positions 2–146 constitute a Globin domain; that stretch reads HWSAEEKQLI…VAHALARKYH (145 aa). 2 residues coordinate heme b: His63 and His92.

Belongs to the globin family. As to quaternary structure, heterotetramer of two alpha chains and two beta chains. Red blood cells.

In terms of biological role, involved in oxygen transport from the lung to the various peripheral tissues. The protein is Hemoglobin subunit beta (HBB) of Psittacula krameri (Rose-ringed parakeet).